The following is a 383-amino-acid chain: MSVTAPLGFRAAGVAAGIKDGGQRDVAVVINDGPHHSAAAVFTKNRVKAAPVQWSQQAVADGQVRAVVLNSGGANACTGAAGFQDARTTAEHLAAALNDSADRIVVCSTGLIGERLPMPKLLAGVDAAVAEAARDGGLNAADAIRTTDTVSKIAFRRGSGYTIGGMAKGAGMLAPSLATMLSVLTTDAVLTPEQCTALLRAATEVTFDRLDTDGCTSTNDTVVLMASGASGTTPDEAEFSRLLTEVCQDLCRQLLADAEGATKAIAIEVVGAASTDDAVTVGRAIARNALFKCAIYGEDPNWGRVLAAVGTTDAVFEPDNINVAINGVWVCRGGSVGDDRAKVNLKPRDVTVTVDLSAGSASATVWTTDLTVDYVHENSAYST.

Positions 146, 168, 179, 259, 378, and 383 each coordinate substrate. T179 (nucleophile) is an active-site residue.

Belongs to the ArgJ family. As to quaternary structure, heterotetramer of two alpha and two beta chains.

It is found in the cytoplasm. It carries out the reaction N(2)-acetyl-L-ornithine + L-glutamate = N-acetyl-L-glutamate + L-ornithine. It catalyses the reaction L-glutamate + acetyl-CoA = N-acetyl-L-glutamate + CoA + H(+). It functions in the pathway amino-acid biosynthesis; L-arginine biosynthesis; L-ornithine and N-acetyl-L-glutamate from L-glutamate and N(2)-acetyl-L-ornithine (cyclic): step 1/1. It participates in amino-acid biosynthesis; L-arginine biosynthesis; N(2)-acetyl-L-ornithine from L-glutamate: step 1/4. In terms of biological role, catalyzes two activities which are involved in the cyclic version of arginine biosynthesis: the synthesis of N-acetylglutamate from glutamate and acetyl-CoA as the acetyl donor, and of ornithine by transacetylation between N(2)-acetylornithine and glutamate. This Thermobifida fusca (strain YX) protein is Arginine biosynthesis bifunctional protein ArgJ.